Here is a 226-residue protein sequence, read N- to C-terminus: PKHD-type hydroxylase Bind_0236 (226 aa).

The Fe2OG dioxygenase domain maps to 78 to 178 (TIFPPLFNRY…RIASFFWIQS (101 aa)). Fe cation-binding residues include histidine 96, aspartate 98, and histidine 159. Arginine 169 contributes to the 2-oxoglutarate binding site.

Requires Fe(2+) as cofactor. L-ascorbate serves as cofactor.

The protein is PKHD-type hydroxylase Bind_0236 of Beijerinckia indica subsp. indica (strain ATCC 9039 / DSM 1715 / NCIMB 8712).